Reading from the N-terminus, the 604-residue chain is Aspartate--tRNA(Asp/Asn) ligase (604 aa).

Position 175 (Glu-175) interacts with L-aspartate. The interval 199 to 202 is aspartate; it reads QQFK. L-aspartate is bound by residues Arg-221 and His-456. 221–223 lines the ATP pocket; it reads RDE. Residue Glu-496 coordinates ATP. Arg-503 lines the L-aspartate pocket. 548-551 serves as a coordination point for ATP; sequence GVDR.

It belongs to the class-II aminoacyl-tRNA synthetase family. Type 1 subfamily. Homodimer.

It localises to the cytoplasm. The catalysed reaction is tRNA(Asx) + L-aspartate + ATP = L-aspartyl-tRNA(Asx) + AMP + diphosphate. In terms of biological role, aspartyl-tRNA synthetase with relaxed tRNA specificity since it is able to aspartylate not only its cognate tRNA(Asp) but also tRNA(Asn). Reaction proceeds in two steps: L-aspartate is first activated by ATP to form Asp-AMP and then transferred to the acceptor end of tRNA(Asp/Asn). The polypeptide is Aspartate--tRNA(Asp/Asn) ligase (Methylorubrum extorquens (strain CM4 / NCIMB 13688) (Methylobacterium extorquens)).